A 418-amino-acid polypeptide reads, in one-letter code: Serine--tRNA ligase (418 aa).

226-228 (TSE) is a binding site for L-serine. Residues 257-259 (RRE) and Val273 contribute to the ATP site. Glu280 provides a ligand contact to L-serine. Position 344–347 (344–347 (ELTS)) interacts with ATP. Thr379 serves as a coordination point for L-serine.

It belongs to the class-II aminoacyl-tRNA synthetase family. Type-1 seryl-tRNA synthetase subfamily. As to quaternary structure, homodimer. The tRNA molecule binds across the dimer.

It is found in the cytoplasm. The catalysed reaction is tRNA(Ser) + L-serine + ATP = L-seryl-tRNA(Ser) + AMP + diphosphate + H(+). It catalyses the reaction tRNA(Sec) + L-serine + ATP = L-seryl-tRNA(Sec) + AMP + diphosphate + H(+). It functions in the pathway aminoacyl-tRNA biosynthesis; selenocysteinyl-tRNA(Sec) biosynthesis; L-seryl-tRNA(Sec) from L-serine and tRNA(Sec): step 1/1. Its function is as follows. Catalyzes the attachment of serine to tRNA(Ser). Is also able to aminoacylate tRNA(Sec) with serine, to form the misacylated tRNA L-seryl-tRNA(Sec), which will be further converted into selenocysteinyl-tRNA(Sec). In Mycobacteroides abscessus (strain ATCC 19977 / DSM 44196 / CCUG 20993 / CIP 104536 / JCM 13569 / NCTC 13031 / TMC 1543 / L948) (Mycobacterium abscessus), this protein is Serine--tRNA ligase.